A 572-amino-acid polypeptide reads, in one-letter code: Methionine--tRNA ligase (572 aa).

The 'HIGH' region signature appears at 11–21 (PYINGIKHLGN). Residues Cys-143, Cys-146, Cys-156, and Cys-159 each contribute to the Zn(2+) site. A 'KMSKS' region motif is present at residues 346–350 (QFSTS). Thr-349 provides a ligand contact to ATP.

The protein belongs to the class-I aminoacyl-tRNA synthetase family. MetG type 1 subfamily. Monomer. The cofactor is Zn(2+).

It localises to the cytoplasm. The enzyme catalyses tRNA(Met) + L-methionine + ATP = L-methionyl-tRNA(Met) + AMP + diphosphate. Is required not only for elongation of protein synthesis but also for the initiation of all mRNA translation through initiator tRNA(fMet) aminoacylation. The chain is Methionine--tRNA ligase from Cereibacter sphaeroides (strain ATCC 17025 / ATH 2.4.3) (Rhodobacter sphaeroides).